The chain runs to 110 residues: Protein RALF-like 19 (110 aa).

The signal sequence occupies residues 1–23; the sequence is MGIKILLILGLLTLAVVAESANA. Residues 24–58 constitute a propeptide, removed in mature form; that stretch reads TWTLTKSCVNGQGCIGEDGELDYLMDSETNRRQLA. 2 disulfide bridges follow: Cys-76/Cys-86 and Cys-99/Cys-105.

It belongs to the plant rapid alkalinization factor (RALF) family. In terms of processing, proteolytically cleaved, probably by S1P, a subtilisin-like serine protease (subtilase).

The protein localises to the secreted. Its function is as follows. Cell signaling peptide that may regulate plant stress, growth, and development. Mediates a rapid alkalinization of extracellular space by mediating a transient increase in the cytoplasmic Ca(2+) concentration leading to a calcium-dependent signaling events through a cell surface receptor and a concomitant activation of some intracellular mitogen-activated protein kinases. The protein is Protein RALF-like 19 (RALFL19) of Arabidopsis thaliana (Mouse-ear cress).